Consider the following 216-residue polypeptide: Protein-methionine-sulfoxide reductase heme-binding subunit MsrQ (216 aa).

A run of 5 helical transmembrane segments spans residues 16–36, 48–68, 82–102, 119–139, and 155–175; these read IWAL…LGAT, EHLL…ITPI, ALGL…MVLD, FITI…TSNI, and LVYV…KVVG.

This sequence belongs to the MsrQ family. In terms of assembly, heterodimer of a catalytic subunit (MsrP) and a heme-binding subunit (MsrQ). Requires FMN as cofactor. Heme b is required as a cofactor.

It localises to the cell inner membrane. Its function is as follows. Part of the MsrPQ system that repairs oxidized periplasmic proteins containing methionine sulfoxide residues (Met-O), using respiratory chain electrons. Thus protects these proteins from oxidative-stress damage caused by reactive species of oxygen and chlorine generated by the host defense mechanisms. MsrPQ is essential for the maintenance of envelope integrity under bleach stress, rescuing a wide series of structurally unrelated periplasmic proteins from methionine oxidation. MsrQ provides electrons for reduction to the reductase catalytic subunit MsrP, using the quinone pool of the respiratory chain. The sequence is that of Protein-methionine-sulfoxide reductase heme-binding subunit MsrQ from Rhizobium meliloti (strain 1021) (Ensifer meliloti).